We begin with the raw amino-acid sequence, 257 residues long: 3-methyl-2-oxobutanoate hydroxymethyltransferase (257 aa).

The Mg(2+) site is built by Asp42 and Asp86. Residues 42-43, Asp86, and Lys116 contribute to the 3-methyl-2-oxobutanoate site; that span reads DS. A Mg(2+)-binding site is contributed by Glu118. The active-site Proton acceptor is the Glu185.

The protein belongs to the PanB family. Homodecamer; pentamer of dimers. Mg(2+) is required as a cofactor.

It is found in the cytoplasm. It catalyses the reaction 3-methyl-2-oxobutanoate + (6R)-5,10-methylene-5,6,7,8-tetrahydrofolate + H2O = 2-dehydropantoate + (6S)-5,6,7,8-tetrahydrofolate. It functions in the pathway cofactor biosynthesis; (R)-pantothenate biosynthesis; (R)-pantoate from 3-methyl-2-oxobutanoate: step 1/2. Its function is as follows. Catalyzes the reversible reaction in which hydroxymethyl group from 5,10-methylenetetrahydrofolate is transferred onto alpha-ketoisovalerate to form ketopantoate. This Prochlorococcus marinus subsp. pastoris (strain CCMP1986 / NIES-2087 / MED4) protein is 3-methyl-2-oxobutanoate hydroxymethyltransferase.